The chain runs to 246 residues: Ribosomal RNA small subunit methyltransferase G (246 aa).

S-adenosyl-L-methionine-binding positions include Gly81, Phe86, 137–138, and Arg156; that span reads AE. The disordered stretch occupies residues 221–246; that stretch reads LVLIRKERPTPKAYPRRAGVPAKSPL.

It belongs to the methyltransferase superfamily. RNA methyltransferase RsmG family.

The protein resides in the cytoplasm. Specifically methylates the N7 position of a guanine in 16S rRNA. The polypeptide is Ribosomal RNA small subunit methyltransferase G (Symbiobacterium thermophilum (strain DSM 24528 / JCM 14929 / IAM 14863 / T)).